Reading from the N-terminus, the 151-residue chain is Large ribosomal subunit protein uL13 (151 aa).

The protein belongs to the universal ribosomal protein uL13 family. As to quaternary structure, part of the 50S ribosomal subunit.

This protein is one of the early assembly proteins of the 50S ribosomal subunit, although it is not seen to bind rRNA by itself. It is important during the early stages of 50S assembly. In Microchaete diplosiphon (Fremyella diplosiphon), this protein is Large ribosomal subunit protein uL13.